Consider the following 443-residue polypeptide: Exodeoxyribonuclease 7 large subunit (443 aa).

The protein belongs to the XseA family. As to quaternary structure, heterooligomer composed of large and small subunits.

It localises to the cytoplasm. The catalysed reaction is Exonucleolytic cleavage in either 5'- to 3'- or 3'- to 5'-direction to yield nucleoside 5'-phosphates.. Bidirectionally degrades single-stranded DNA into large acid-insoluble oligonucleotides, which are then degraded further into small acid-soluble oligonucleotides. This chain is Exodeoxyribonuclease 7 large subunit, found in Legionella pneumophila (strain Lens).